We begin with the raw amino-acid sequence, 579 residues long: Arginine--tRNA ligase (579 aa).

Positions 136–146 match the 'HIGH' region motif; the sequence is ANPTGPLHIGH.

The protein belongs to the class-I aminoacyl-tRNA synthetase family. In terms of assembly, monomer.

The protein resides in the cytoplasm. It carries out the reaction tRNA(Arg) + L-arginine + ATP = L-arginyl-tRNA(Arg) + AMP + diphosphate. The polypeptide is Arginine--tRNA ligase (Anaplasma marginale (strain St. Maries)).